We begin with the raw amino-acid sequence, 92 residues long: Large ribosomal subunit protein eL31 (92 aa).

Position 2 is an N-acetylserine (S2).

This sequence belongs to the eukaryotic ribosomal protein eL31 family. As to quaternary structure, part of the 50S ribosomal subunit.

Binds to the 23S rRNA. Located at the polypeptide exit tunnel on the outside of the subunit. This Haloarcula marismortui (strain ATCC 43049 / DSM 3752 / JCM 8966 / VKM B-1809) (Halobacterium marismortui) protein is Large ribosomal subunit protein eL31 (rpl31e).